Consider the following 106-residue polypeptide: 3-phenylpropionate/cinnamic acid dioxygenase ferredoxin subunit (106 aa).

One can recognise a Rieske domain in the interval 4-99; the sequence is IYACPVADVP…VHVEGSDIFI (96 aa). Positions 42, 44, 62, and 65 each coordinate [2Fe-2S] cluster.

This sequence belongs to the bacterial ring-hydroxylating dioxygenase ferredoxin component family. In terms of assembly, this dioxygenase system consists of four proteins: the two subunits of the hydroxylase component (HcaE and HcaF), a ferredoxin (HcaC) and a ferredoxin reductase (HcaD). Requires [2Fe-2S] cluster as cofactor.

The protein operates within aromatic compound metabolism; 3-phenylpropanoate degradation. Functionally, part of the multicomponent 3-phenylpropionate dioxygenase, that converts 3-phenylpropionic acid (PP) and cinnamic acid (CI) into 3-phenylpropionate-dihydrodiol (PP-dihydrodiol) and cinnamic acid-dihydrodiol (CI-dihydrodiol), respectively. This protein seems to be a 2Fe-2S ferredoxin. The chain is 3-phenylpropionate/cinnamic acid dioxygenase ferredoxin subunit from Shigella boydii serotype 4 (strain Sb227).